Here is a 453-residue protein sequence, read N- to C-terminus: MISLKDAIKLSSSDIVKLRKNLKDKIKDNRQLGAYIEQLTNSDISDEYAGVPIAIKDNIQVKNWSITSCSKILQGYVAPYHATVVEKLLKAGLAPFGRTNMDEFAMGSTTESSFYGKTLNPLDHTRVPGGSSGGSAAAVSAGLAIAALGSDTGGSIRQPAAFCGCVGFKPTYGRVSRYGLGAYSSSLDQIGPITRSVEDAALLYDIIAGHDPKDSTSSNLENISTSDKLNSDRKLTIAVIKNYVDGASQDVKDSLYKVVDKLKEAGHNIIYKDLSNSKYDIAAYYIIATAEASANLSRYDGVRYGRRADSNSLGQMYSKTRGEGFGVEVQRRMLLGTFVLSSGYYDAYYIKAQKARAFIKLEYEEILNEADIMLMPVAPSVAYKFGELSDPLSAYLSDIYTIGVNLAGLPAITVPVQSDKNGLNISAQLIGGAWKEQDVLDAAFGLEKLVKGN.

Residues lysine 56 and serine 131 each act as charge relay system in the active site. Catalysis depends on serine 155, which acts as the Acyl-ester intermediate.

Belongs to the amidase family. GatA subfamily. As to quaternary structure, heterotrimer of A, B and C subunits.

The catalysed reaction is L-glutamyl-tRNA(Gln) + L-glutamine + ATP + H2O = L-glutaminyl-tRNA(Gln) + L-glutamate + ADP + phosphate + H(+). Functionally, allows the formation of correctly charged Gln-tRNA(Gln) through the transamidation of misacylated Glu-tRNA(Gln) in organisms which lack glutaminyl-tRNA synthetase. The reaction takes place in the presence of glutamine and ATP through an activated gamma-phospho-Glu-tRNA(Gln). This Campylobacter fetus subsp. fetus (strain 82-40) protein is Glutamyl-tRNA(Gln) amidotransferase subunit A.